The following is a 349-amino-acid chain: MNDTADKLTFTRPDDWHLHLRDGNAMRSVLPDTARRFARAIIMPNLKPPIVTTEQAAAYRVRILSALPAELAGRFEPLMTLYLTDTTSPEEITRAQASGIVQGIKLYPAGATTHSDAGVTDIARCEATLEKMEELDMPLLVHGEVVDPAVDVFDREKIFIDRVLTPLLQRFPGLRVVFEHITTREAVEFVQTAPNRIAATITAHHLMLNRNALFTGGLRPHHYCLPVLKREIHRQALLEAATSGHSRFFLGTDSAPHPVRDKESACGCAGIYSAHAAIEFYAEVFEQAGRLDRLEAFTSFHGPDFYGLPRNTDRISLIRESWQIPEQVELGEEKLIPLRAGEHARWKLA.

Residues His-17 and His-19 each coordinate Zn(2+). Substrate is bound by residues 19–21 (HLR) and Asn-45. Lys-105, His-142, and His-180 together coordinate Zn(2+). Lys-105 is subject to N6-carboxylysine. His-142 is a substrate binding site. Leu-225 is a binding site for substrate. Asp-253 is a binding site for Zn(2+). The active site involves Asp-253. Residues His-257 and Ala-269 each contribute to the substrate site.

Belongs to the metallo-dependent hydrolases superfamily. DHOase family. Class II DHOase subfamily. Homodimer. Zn(2+) serves as cofactor.

The enzyme catalyses (S)-dihydroorotate + H2O = N-carbamoyl-L-aspartate + H(+). It participates in pyrimidine metabolism; UMP biosynthesis via de novo pathway; (S)-dihydroorotate from bicarbonate: step 3/3. In terms of biological role, catalyzes the reversible cyclization of carbamoyl aspartate to dihydroorotate. The polypeptide is Dihydroorotase (Nitrosomonas europaea (strain ATCC 19718 / CIP 103999 / KCTC 2705 / NBRC 14298)).